Here is a 145-residue protein sequence, read N- to C-terminus: Basic phospholipase A2 GL1-1 (145 aa).

The N-terminal stretch at 1–21 is a signal peptide; sequence MYPAHLLVLLAVCVSLLGASA. Residues 22–27 constitute a propeptide that is removed on maturation; that stretch reads IPPLPL. 7 cysteine pairs are disulfide-bonded: cysteine 38-cysteine 98, cysteine 54-cysteine 144, cysteine 56-cysteine 72, cysteine 71-cysteine 125, cysteine 78-cysteine 118, cysteine 87-cysteine 111, and cysteine 105-cysteine 116. Residues tyrosine 55, glycine 57, and glycine 59 each contribute to the Ca(2+) site. Residue histidine 75 is part of the active site. Aspartate 76 provides a ligand contact to Ca(2+). Residue aspartate 119 is part of the active site.

Belongs to the phospholipase A2 family. Group I subfamily. D49 sub-subfamily. Ca(2+) serves as cofactor. In terms of tissue distribution, expressed by the venom gland.

It is found in the secreted. It catalyses the reaction a 1,2-diacyl-sn-glycero-3-phosphocholine + H2O = a 1-acyl-sn-glycero-3-phosphocholine + a fatty acid + H(+). Its function is as follows. PLA2 catalyzes the calcium-dependent hydrolysis of the 2-acyl groups in 3-sn-phosphoglycerides. This chain is Basic phospholipase A2 GL1-1, found in Laticauda semifasciata (Black-banded sea krait).